The chain runs to 33 residues: U23-ctenitoxin-Pn1a (33 aa).

Intrachain disulfides connect C3/C16, C10/C21, and C15/C30.

In terms of tissue distribution, expressed by the venom gland.

Its subcellular location is the secreted. Non-toxic to mice. This chain is U23-ctenitoxin-Pn1a, found in Phoneutria nigriventer (Brazilian armed spider).